We begin with the raw amino-acid sequence, 240 residues long: 2,3-bisphosphoglycerate-dependent phosphoglycerate mutase (240 aa).

Residues 5–12 (RHGESVWN), 18–19 (TG), arginine 57, 84–87 (ERHY), lysine 95, 111–112 (RR), and 180–181 (GN) each bind substrate. Histidine 6 serves as the catalytic Tele-phosphohistidine intermediate. Glutamate 84 (proton donor/acceptor) is an active-site residue.

Belongs to the phosphoglycerate mutase family. BPG-dependent PGAM subfamily. Homodimer.

The enzyme catalyses (2R)-2-phosphoglycerate = (2R)-3-phosphoglycerate. The protein operates within carbohydrate degradation; glycolysis; pyruvate from D-glyceraldehyde 3-phosphate: step 3/5. Functionally, catalyzes the interconversion of 2-phosphoglycerate and 3-phosphoglycerate. This chain is 2,3-bisphosphoglycerate-dependent phosphoglycerate mutase, found in Nitrosococcus oceani (strain ATCC 19707 / BCRC 17464 / JCM 30415 / NCIMB 11848 / C-107).